Reading from the N-terminus, the 183-residue chain is Large ribosomal subunit protein uL6 (183 aa).

Belongs to the universal ribosomal protein uL6 family. In terms of assembly, part of the 50S ribosomal subunit.

In terms of biological role, this protein binds to the 23S rRNA, and is important in its secondary structure. It is located near the subunit interface in the base of the L7/L12 stalk, and near the tRNA binding site of the peptidyltransferase center. The protein is Large ribosomal subunit protein uL6 of Chlamydia felis (strain Fe/C-56) (Chlamydophila felis).